A 292-amino-acid polypeptide reads, in one-letter code: Glycinyltransferase (292 aa).

The protein belongs to the thymidine aminotransferase family.

It carries out the reaction 5-phosphomethyl-dUMP in DNA + glycine = 5-N(alpha)-glycyl-dTMP in DNA + phosphate. Transfers glycine to 5-phosphomethyl-2'-deoxyuridine (5-PmdU) to produce 5-Nalpha-glycinylthymidine (Nalpha-GlyT) on DNA as a step in the pathway leading to thymidine hypermodifications in the viral genome. As a final result of the pathway of hypermodification, 5-acetylaminomethyl-2'-deoxyuridine (5-AcNmdU) substitutes for a subset of thymidines in the viral DNA. These modifications probably prevent degradation of viral genome by the host restriction-modification antiviral defense system. This chain is Glycinyltransferase, found in Pseudomonas phage PaMx11.